The following is a 178-amino-acid chain: Probable chorismate pyruvate-lyase (178 aa).

Substrate-binding residues include Arg-72, Leu-110, and Glu-169.

This sequence belongs to the UbiC family.

It is found in the cytoplasm. The catalysed reaction is chorismate = 4-hydroxybenzoate + pyruvate. Its pathway is cofactor biosynthesis; ubiquinone biosynthesis. Functionally, removes the pyruvyl group from chorismate, with concomitant aromatization of the ring, to provide 4-hydroxybenzoate (4HB) for the ubiquinone pathway. The sequence is that of Probable chorismate pyruvate-lyase from Nitrosomonas eutropha (strain DSM 101675 / C91 / Nm57).